The sequence spans 293 residues: Probable endonuclease 4 (293 aa).

Positions 75, 115, 153, 187, 190, 224, 237, 239, and 269 each coordinate Zn(2+).

The protein belongs to the AP endonuclease 2 family. Zn(2+) is required as a cofactor.

It catalyses the reaction Endonucleolytic cleavage to 5'-phosphooligonucleotide end-products.. Functionally, endonuclease IV plays a role in DNA repair. It cleaves phosphodiester bonds at apurinic or apyrimidinic (AP) sites, generating a 3'-hydroxyl group and a 5'-terminal sugar phosphate. This is Probable endonuclease 4 from Chlamydia pneumoniae (Chlamydophila pneumoniae).